A 131-amino-acid chain; its full sequence is Large ribosomal subunit protein bL19 (131 aa).

The tract at residues 112–131 (KSARIAERAGGPKASASTEA) is disordered.

It belongs to the bacterial ribosomal protein bL19 family.

In terms of biological role, this protein is located at the 30S-50S ribosomal subunit interface and may play a role in the structure and function of the aminoacyl-tRNA binding site. In Caulobacter vibrioides (strain ATCC 19089 / CIP 103742 / CB 15) (Caulobacter crescentus), this protein is Large ribosomal subunit protein bL19.